The sequence spans 456 residues: Asparagine--tRNA ligase (456 aa).

The protein belongs to the class-II aminoacyl-tRNA synthetase family. As to quaternary structure, homodimer.

It is found in the cytoplasm. It carries out the reaction tRNA(Asn) + L-asparagine + ATP = L-asparaginyl-tRNA(Asn) + AMP + diphosphate + H(+). The polypeptide is Asparagine--tRNA ligase (Mycoplasmoides gallisepticum (strain R(low / passage 15 / clone 2)) (Mycoplasma gallisepticum)).